We begin with the raw amino-acid sequence, 514 residues long: Glucose-1-phosphate adenylyltransferase small subunit 2, chloroplastic/amyloplastic/cytosolic (514 aa).

Residues 1 to 64 constitute a chloroplast transit peptide; that stretch reads MAMAAAMGVA…RRRPLVFSPR (64 aa). Positions 35 to 74 are disordered; that stretch reads RPRRPRGVASSSSSSSSAGRRRRPLVFSPRAVSDSKSSQT. Positions 41–52 are enriched in low complexity; that stretch reads GVASSSSSSSSA.

Belongs to the bacterial/plant glucose-1-phosphate adenylyltransferase family. In terms of assembly, heterotetramer composed of two small and two large subunits. As to expression, expressed in leaves.

The protein resides in the plastid. It localises to the chloroplast. The protein localises to the amyloplast. It is found in the cytoplasm. Its subcellular location is the cytosol. It carries out the reaction alpha-D-glucose 1-phosphate + ATP + H(+) = ADP-alpha-D-glucose + diphosphate. Its pathway is glycan biosynthesis; starch biosynthesis. Activated by 3'phosphoglycerate, inhibited by orthophosphate. Allosteric regulation. Inhibited by inorganic phosphate (Pi). Involved in synthesis of starch. Catalyzes the synthesis of ADP-glucose, a molecule that serves as an activated glycosyl donor for alpha-1,4-glucan synthesis. The chloroplastic isoform 1 is essential for starch synthesis in leaf chloroplasts and the cytosolic isoform 2 for synthesis in seed endosperm. In Oryza sativa subsp. japonica (Rice), this protein is Glucose-1-phosphate adenylyltransferase small subunit 2, chloroplastic/amyloplastic/cytosolic.